Consider the following 303-residue polypeptide: Dehydrodolichyl diphosphate synthase 1 (303 aa).

A helical transmembrane segment spans residues 14-34 (LLFLFLIPCLFITSYIGFPVF).

This sequence belongs to the UPP synthase family. It depends on Mg(2+) as a cofactor. In terms of tissue distribution, expressed in low levels in the whole plant. Preferentially expressed in roots.

It localises to the endoplasmic reticulum membrane. The enzyme catalyses n isopentenyl diphosphate + (2E,6E)-farnesyl diphosphate = a di-trans,poly-cis-polyprenyl diphosphate + n diphosphate. It functions in the pathway protein modification; protein glycosylation. Catalyzes cis-prenyl chain elongation to produce the polyprenyl backbone of dolichol, a glycosyl carrier-lipid required for the biosynthesis of several classes of glycoprotein. The polypeptide is Dehydrodolichyl diphosphate synthase 1 (DPS) (Arabidopsis thaliana (Mouse-ear cress)).